The sequence spans 141 residues: MAKKVAAQIKLQLPAGKATPAPPVGPALGQHGVNIMEFCKRFNAETADKAGMILPVVITVYEDKSFTFIIKTPPASFLLKKAAGIEKGSSEPKRKIVGKVTRKQIEEIAKTKMPDLNANSLEAAMKIIEGTAKSMGIEVVD.

The protein belongs to the universal ribosomal protein uL11 family. As to quaternary structure, part of the ribosomal stalk of the 50S ribosomal subunit. Interacts with L10 and the large rRNA to form the base of the stalk. L10 forms an elongated spine to which L12 dimers bind in a sequential fashion forming a multimeric L10(L12)X complex. Post-translationally, one or more lysine residues are methylated.

Forms part of the ribosomal stalk which helps the ribosome interact with GTP-bound translation factors. The sequence is that of Large ribosomal subunit protein uL11 from Thermotoga sp. (strain RQ2).